A 1104-amino-acid chain; its full sequence is Extended synaptotagmin-1 (1104 aa).

Met1 is subject to N-acetylmethionine. At 1-38 (MERSPGEGPSPSPTDQPSAPSDPTGQPPAAHAKPDPGS) the chain is on the cytoplasmic side. The interval 1–47 (MERSPGEGPSPSPTDQPSAPSDPTGQPPAAHAKPDPGSGGQPAGPGA) is disordered. Over residues 15-24 (DQPSAPSDPT) the composition is skewed to polar residues. Residues 37–47 (GSGGQPAGPGA) show a composition bias toward gly residues. A helical membrane pass occupies residues 39-59 (GGQPAGPGAAGEALAVLTSFG). Over 60–62 (KRL) the chain is Lumenal. Residues 63–83 (LVLIPVYLAGAVGLSVGFVLF) traverse the membrane as a helical segment. The Cytoplasmic segment spans residues 84–1104 (GLALYLGWRR…LMDDKDKGSS (1021 aa)). The stretch at 91–116 (WRRVRDEKERSLRAARQLLDDEEQLT) forms a coiled coil. One can recognise an SMP-LTD domain in the interval 135–313 (DVEKAEWLNK…LPNRLLVPLV (179 aa)). 4 consecutive C2 domains span residues 312–433 (LVPD…DDWF), 460–580 (QVLQ…QLSS), 627–751 (SVDA…DEWL), and 777–899 (LEEV…TLNS). Ser324 carries the phosphoserine; by CDK5 modification. 8 residues coordinate Ca(2+): Lys344, Asp345, Asp357, Asp404, Asp406, Asp408, Asp410, and Asp411. Disordered stretches follow at residues 617-641 (VDSE…TPDS), 813-833 (RKGT…TSHK), and 924-950 (SHSY…VTSS). An N6-acetyllysine modification is found at Lys817. Phosphoserine is present on residues Ser820 and Ser941. Residues 925 to 946 (HSYSHSSSSLSEEPELSGGPPH) are compositionally biased toward low complexity. Thr948 bears the Phosphothreonine mark. Ser949 and Ser963 each carry phosphoserine. One can recognise a C2 5 domain in the interval 971-1093 (PLGQVKLTVW…DLSQGVARWY (123 aa)). Tyr1009 bears the Phosphotyrosine mark. The required for phosphatidylinositol 4,5-bisphosphate-dependent location at the cell membrane stretch occupies residues 1018 to 1025 (KNRGTKRK). Residue Ser1034 is modified to Phosphoserine.

This sequence belongs to the extended synaptotagmin family. As to quaternary structure, interacts with ESYT2 and ESYT3. Interacts with ADGRD1; inhibiting the G-protein-coupled receptor activity of ADGRD1. Interaction with ADGRD1 is abolished when cytosolic calcium increases, relieving ADGRD1 G-protein-coupled receptor activity. Interacts (phosphorylated form) with SLC2A4. In terms of processing, phosphorylated on Ser residues in insulin-treated adipocytes (in vitro); this promotes interaction with SLC2A4.

Its subcellular location is the endoplasmic reticulum membrane. The protein localises to the cell membrane. Its function is as follows. Binds calcium (via the C2 domains) and translocates to sites of contact between the endoplasmic reticulum and the cell membrane in response to increased cytosolic calcium levels. Helps tether the endoplasmic reticulum to the cell membrane and promotes the formation of appositions between the endoplasmic reticulum and the cell membrane. Acts as an inhibitor of ADGRD1 G-protein-coupled receptor activity in absence of cytosolic calcium. Binds glycerophospholipids in a barrel-like domain and may play a role in cellular lipid transport. The polypeptide is Extended synaptotagmin-1 (ESYT1) (Pongo abelii (Sumatran orangutan)).